Consider the following 49-residue polypeptide: Large ribosomal subunit protein bL33 (49 aa).

Belongs to the bacterial ribosomal protein bL33 family.

The chain is Large ribosomal subunit protein bL33 from Alkaliphilus oremlandii (strain OhILAs) (Clostridium oremlandii (strain OhILAs)).